Reading from the N-terminus, the 404-residue chain is CCA-adding enzyme (404 aa).

ATP-binding residues include Gly27 and Arg30. Gly27 and Arg30 together coordinate CTP. Asp40 and Asp42 together coordinate Mg(2+). ATP contacts are provided by Arg111, Asp154, Arg157, Arg160, and Arg163. Residues Arg111, Asp154, Arg157, Arg160, and Arg163 each coordinate CTP.

This sequence belongs to the tRNA nucleotidyltransferase/poly(A) polymerase family. Bacterial CCA-adding enzyme type 3 subfamily. In terms of assembly, homodimer. Mg(2+) serves as cofactor.

The enzyme catalyses a tRNA precursor + 2 CTP + ATP = a tRNA with a 3' CCA end + 3 diphosphate. It catalyses the reaction a tRNA with a 3' CCA end + 2 CTP + ATP = a tRNA with a 3' CCACCA end + 3 diphosphate. In terms of biological role, catalyzes the addition and repair of the essential 3'-terminal CCA sequence in tRNAs without using a nucleic acid template. Adds these three nucleotides in the order of C, C, and A to the tRNA nucleotide-73, using CTP and ATP as substrates and producing inorganic pyrophosphate. tRNA 3'-terminal CCA addition is required both for tRNA processing and repair. Also involved in tRNA surveillance by mediating tandem CCA addition to generate a CCACCA at the 3' terminus of unstable tRNAs. While stable tRNAs receive only 3'-terminal CCA, unstable tRNAs are marked with CCACCA and rapidly degraded. In Geobacillus thermodenitrificans (strain NG80-2), this protein is CCA-adding enzyme.